Consider the following 384-residue polypeptide: Spermidine/putrescine import ATP-binding protein PotA (384 aa).

Residues 6 to 238 (IAFQNVSKVF…PINHFVATFI (233 aa)) form the ABC transporter domain. 40 to 47 (GASGSGKS) contributes to the ATP binding site.

This sequence belongs to the ABC transporter superfamily. Spermidine/putrescine importer (TC 3.A.1.11.1) family. In terms of assembly, the complex is composed of two ATP-binding proteins (PotA), two transmembrane proteins (PotB and PotC) and a solute-binding protein (PotD).

Its subcellular location is the cell membrane. The enzyme catalyses ATP + H2O + polyamine-[polyamine-binding protein]Side 1 = ADP + phosphate + polyamineSide 2 + [polyamine-binding protein]Side 1.. Its function is as follows. Part of the ABC transporter complex PotABCD involved in spermidine/putrescine import. Responsible for energy coupling to the transport system. In Streptococcus thermophilus (strain ATCC BAA-250 / LMG 18311), this protein is Spermidine/putrescine import ATP-binding protein PotA.